We begin with the raw amino-acid sequence, 197 residues long: Xanthine phosphoribosyltransferase (197 aa).

Xanthine contacts are provided by Leu-20 and Asn-27. 128-132 is a 5-phospho-alpha-D-ribose 1-diphosphate binding site; the sequence is ANGQA. Lys-156 serves as a coordination point for xanthine.

It belongs to the purine/pyrimidine phosphoribosyltransferase family. Xpt subfamily. As to quaternary structure, homodimer.

The protein localises to the cytoplasm. The catalysed reaction is XMP + diphosphate = xanthine + 5-phospho-alpha-D-ribose 1-diphosphate. It functions in the pathway purine metabolism; XMP biosynthesis via salvage pathway; XMP from xanthine: step 1/1. Converts the preformed base xanthine, a product of nucleic acid breakdown, to xanthosine 5'-monophosphate (XMP), so it can be reused for RNA or DNA synthesis. This is Xanthine phosphoribosyltransferase from Bacillus thuringiensis (strain Al Hakam).